The chain runs to 229 residues: General odorant-binding protein 69 (229 aa).

Residues 1 to 20 form the signal peptide; the sequence is MDRLLLVLLSSASLLLTVYG. Residues Cys66 and Cys106 are joined by a disulfide bond.

Belongs to the PBP/GOBP family.

Its subcellular location is the secreted. Its function is as follows. Present in the aqueous fluid surrounding olfactory sensory dendrites and are thought to aid in the capture and transport of hydrophobic odorants into and through this fluid. The protein is General odorant-binding protein 69 (Obp69) of Anopheles gambiae (African malaria mosquito).